The chain runs to 991 residues: Seizure protein 6 (991 aa).

The first 19 residues, 1-19 (MRPAALLLLPSLLALLAHG), serve as a signal peptide directing secretion. Over 20-922 (LSSEAPITGE…AASSALDAAH (903 aa)) the chain is Extracellular. Positions 79 to 193 (EGLEREEAPQ…QEGPGDMDRP (115 aa)) are disordered. Residues 119-132 (TSPTPAVAAAPTQP) show a composition bias toward low complexity. Polar residues predominate over residues 175 to 184 (PPSQAWTPTQ). Cys-241 and Cys-268 form a disulfide bridge. One can recognise a CUB 1 domain in the interval 241–353 (CSWNFSGPEG…HFRYQAYLLS (113 aa)). A glycan (N-linked (GlcNAc...) asparagine) is linked at Asn-286. The Sushi 1 domain occupies 352–411 (LSCHFPRRPAYGDVTVTSLHPGGSAHFHCATGYQLKGARFLTCLNATQPFWDSQEPVCIA). Intrachain disulfides connect Cys-354-Cys-394, Cys-380-Cys-409, Cys-413-Cys-440, Cys-529-Cys-571, Cys-556-Cys-586, Cys-590-Cys-616, Cys-707-Cys-749, Cys-735-Cys-762, Cys-768-Cys-810, Cys-796-Cys-827, Cys-835-Cys-877, and Cys-863-Cys-892. Residues Asn-396, Asn-433, and Asn-538 are each glycosylated (N-linked (GlcNAc...) asparagine). The region spanning 413–524 (CGGVIRNATT…AGMALRYEAF (112 aa)) is the CUB 2 domain. One can recognise a Sushi 2 domain in the interval 527–588 (GHCYEPFVKY…WNETEPACRA (62 aa)). Residues 590 to 701 (CSGEITDSAG…QGFVIHFFEV (112 aa)) form the CUB 3 domain. 3 Sushi domains span residues 705-764 (DTCP…SCQR), 766-829 (TSCH…KCLL), and 833-894 (KPCH…ICRA). A helical membrane pass occupies residues 923-943 (LAAAIFLPLVAMVLLVGGVYL). The Cytoplasmic segment spans residues 944–991 (YFSRFQGKSPLQLPRTHPRPYNRITVESAFDNPTYETGSLSFAGDERI).

This sequence belongs to the SEZ6 family. Post-translationally, glycosylated. As to expression, brain-specific. Expressed in extrasynaptic and synaptic subcellular fractions (at protein level). Expression correlates with the most active periods of cortical neurogenesis and neuronal maturation. Expression is restricted to the gray matter with higher levels in the forebrain including the olfactory bulb, anterior olfactory nuclei, olfactory tubercle, striatum, hippocampal CA1 pyramidal cell layer and cerebral cortex. Expression is up-regulated with the convulsant drug, pentylenetetrazole.

The protein resides in the cell membrane. It is found in the cell projection. Its subcellular location is the dendrite. It localises to the synapse. The protein localises to the secreted. The protein resides in the cytoplasm. Its function is as follows. May play a role in cell-cell recognition and in neuronal membrane signaling. Seems to be important for the achievement of the necessary balance between dendrite elongation and branching during the elaboration of a complex dendritic arbor. Involved in the development of appropriate excitatory synaptic connectivity. The polypeptide is Seizure protein 6 (Sez6) (Mus musculus (Mouse)).